A 403-amino-acid polypeptide reads, in one-letter code: D-galactonate dehydratase family member ManD (403 aa).

The substrate site is built by Asn-37 and His-122. The active-site Proton donor/acceptor is the Tyr-159. Residue Asp-211 coordinates Mg(2+). His-213 serves as the catalytic Proton donor/acceptor. Mg(2+) is bound by residues Glu-237 and Glu-263. Substrate is bound by residues Glu-263, Arg-284, His-313, Asp-317, and Glu-340.

Belongs to the mandelate racemase/muconate lactonizing enzyme family. GalD subfamily. Mg(2+) is required as a cofactor.

It carries out the reaction D-mannonate = 2-dehydro-3-deoxy-D-gluconate + H2O. The enzyme catalyses D-gluconate = 2-dehydro-3-deoxy-D-gluconate + H2O. In terms of biological role, has low dehydratase activity with D-mannonate and D-gluconate, suggesting that these are not physiological substrates and that it has no significant role in the in vivo degradation of these compounds. Has no detectable activity with a panel of 70 other acid sugars (in vitro). This Chromohalobacter salexigens (strain ATCC BAA-138 / DSM 3043 / CIP 106854 / NCIMB 13768 / 1H11) protein is D-galactonate dehydratase family member ManD (manD).